We begin with the raw amino-acid sequence, 447 residues long: Glutamate--tRNA ligase 1 (447 aa).

The short motif at 10-20 (PSPTGMLHVGN) is the 'HIGH' region element. The 'KMSKS' region signature appears at 240–244 (KISKR). K243 serves as a coordination point for ATP.

Belongs to the class-I aminoacyl-tRNA synthetase family. Glutamate--tRNA ligase type 1 subfamily. Monomer.

The protein resides in the cytoplasm. The catalysed reaction is tRNA(Glu) + L-glutamate + ATP = L-glutamyl-tRNA(Glu) + AMP + diphosphate. Functionally, catalyzes the attachment of glutamate to tRNA(Glu) in a two-step reaction: glutamate is first activated by ATP to form Glu-AMP and then transferred to the acceptor end of tRNA(Glu). The polypeptide is Glutamate--tRNA ligase 1 (Rickettsia akari (strain Hartford)).